The primary structure comprises 208 residues: Large ribosomal subunit protein uL4 (208 aa).

Residues 45-95 (RQGTHKAKTRSEVRGGGKKPFRQKGTGNARQGSSRSPIHVGGGTIFGPQPH) form a disordered region. The segment covering 69-80 (GTGNARQGSSRS) has biased composition (polar residues).

The protein belongs to the universal ribosomal protein uL4 family. Part of the 50S ribosomal subunit.

Its function is as follows. One of the primary rRNA binding proteins, this protein initially binds near the 5'-end of the 23S rRNA. It is important during the early stages of 50S assembly. It makes multiple contacts with different domains of the 23S rRNA in the assembled 50S subunit and ribosome. Functionally, forms part of the polypeptide exit tunnel. The polypeptide is Large ribosomal subunit protein uL4 (Chlorobium chlorochromatii (strain CaD3)).